A 437-amino-acid polypeptide reads, in one-letter code: Histidinol dehydrogenase (437 aa).

NAD(+)-binding residues include Tyr-137, Gln-199, and Asn-222. Residues Ser-245, Gln-267, and His-270 each contribute to the substrate site. The Zn(2+) site is built by Gln-267 and His-270. Residues Glu-335 and His-336 each act as proton acceptor in the active site. 4 residues coordinate substrate: His-336, Asp-369, Glu-423, and His-428. Position 369 (Asp-369) interacts with Zn(2+). His-428 provides a ligand contact to Zn(2+).

This sequence belongs to the histidinol dehydrogenase family. Zn(2+) is required as a cofactor.

It carries out the reaction L-histidinol + 2 NAD(+) + H2O = L-histidine + 2 NADH + 3 H(+). It functions in the pathway amino-acid biosynthesis; L-histidine biosynthesis; L-histidine from 5-phospho-alpha-D-ribose 1-diphosphate: step 9/9. Catalyzes the sequential NAD-dependent oxidations of L-histidinol to L-histidinaldehyde and then to L-histidine. The sequence is that of Histidinol dehydrogenase from Parasynechococcus marenigrum (strain WH8102).